A 466-amino-acid polypeptide reads, in one-letter code: Ribulose bisphosphate carboxylase large chain (466 aa).

Lys-4 carries the post-translational modification N6,N6,N6-trimethyllysine. Residues Asn-113 and Thr-163 each coordinate substrate. The Proton acceptor role is filled by Lys-165. A substrate-binding site is contributed by Lys-167. 3 residues coordinate Mg(2+): Lys-191, Asp-193, and Glu-194. Lys-191 carries the N6-carboxylysine modification. Residue His-284 is the Proton acceptor of the active site. 3 residues coordinate substrate: Arg-285, His-317, and Ser-369.

This sequence belongs to the RuBisCO large chain family. Type I subfamily. As to quaternary structure, heterohexadecamer of 8 large chains and 8 small chains; disulfide-linked. The disulfide link is formed within the large subunit homodimers. It depends on Mg(2+) as a cofactor. Post-translationally, the disulfide bond which can form in the large chain dimeric partners within the hexadecamer appears to be associated with oxidative stress and protein turnover.

The protein localises to the plastid. It is found in the chloroplast. The enzyme catalyses 2 (2R)-3-phosphoglycerate + 2 H(+) = D-ribulose 1,5-bisphosphate + CO2 + H2O. It catalyses the reaction D-ribulose 1,5-bisphosphate + O2 = 2-phosphoglycolate + (2R)-3-phosphoglycerate + 2 H(+). In terms of biological role, ruBisCO catalyzes two reactions: the carboxylation of D-ribulose 1,5-bisphosphate, the primary event in carbon dioxide fixation, as well as the oxidative fragmentation of the pentose substrate in the photorespiration process. Both reactions occur simultaneously and in competition at the same active site. This chain is Ribulose bisphosphate carboxylase large chain, found in Barleria prionitis (Porcupine flower).